The primary structure comprises 719 residues: Polyribonucleotide nucleotidyltransferase (719 aa).

Mg(2+) is bound by residues Asp491 and Asp497. Positions 558-617 constitute a KH domain; sequence PRMLTIKINPEKIRDVIGKGGATIRALTEETGTQIDISDDGTIVIASVDETQAKEAQRRI. The 69-residue stretch at 627–695 folds into the S1 motif domain; it reads GQIYDGSVLR…DKGRLRLSIK (69 aa).

It belongs to the polyribonucleotide nucleotidyltransferase family. The cofactor is Mg(2+).

It localises to the cytoplasm. The catalysed reaction is RNA(n+1) + phosphate = RNA(n) + a ribonucleoside 5'-diphosphate. Involved in mRNA degradation. Catalyzes the phosphorolysis of single-stranded polyribonucleotides processively in the 3'- to 5'-direction. The protein is Polyribonucleotide nucleotidyltransferase of Bordetella bronchiseptica (strain ATCC BAA-588 / NCTC 13252 / RB50) (Alcaligenes bronchisepticus).